A 263-amino-acid polypeptide reads, in one-letter code: Chromosomal replication initiator protein DnaA (263 aa).

Residue Glu1 is a region of interest, domain I, interacts with DnaA modulators. Glu1 is a region of interest (domain II). The segment at Glu1 to Ser179 is domain III, AAA+ region. ATP is bound by residues Gly3, Gly5, Lys6, and Thr7. The interval Gln180–Phe263 is domain IV, binds dsDNA.

The protein belongs to the DnaA family. As to quaternary structure, oligomerizes as a right-handed, spiral filament on DNA at oriC.

The protein resides in the cytoplasm. In terms of biological role, plays an essential role in the initiation and regulation of chromosomal replication. ATP-DnaA binds to the origin of replication (oriC) to initiate formation of the DNA replication initiation complex once per cell cycle. Binds the DnaA box (a 9 base pair repeat at the origin) and separates the double-stranded (ds)DNA. Forms a right-handed helical filament on oriC DNA; dsDNA binds to the exterior of the filament while single-stranded (ss)DNA is stabiized in the filament's interior. The ATP-DnaA-oriC complex binds and stabilizes one strand of the AT-rich DNA unwinding element (DUE), permitting loading of DNA polymerase. After initiation quickly degrades to an ADP-DnaA complex that is not apt for DNA replication. Binds acidic phospholipids. The protein is Chromosomal replication initiator protein DnaA of Mycoplasma mycoides.